Here is a 265-residue protein sequence, read N- to C-terminus: Dehydrogenase RED2 (265 aa).

A helical membrane pass occupies residues 6-26; that stretch reads SFLLSKLFLCIALCTAYVAFS. Asparagine 45 carries N-linked (GlcNAc...) asparagine glycosylation. The chain crosses the membrane as a helical span at residues 47–67; it reads TSTVFGLTIVAIGLSALSSWL. Asparagine 74 carries an N-linked (GlcNAc...) asparagine glycan. Valine 89 lines the NADP(+) pocket. An N-linked (GlcNAc...) asparagine glycan is attached at asparagine 127. The NADP(+) site is built by aspartate 136 and asparagine 163. Asparagine 176 carries N-linked (GlcNAc...) asparagine glycosylation. Catalysis depends on serine 216, which acts as the Proton donor. Residues tyrosine 228 and lysine 232 each contribute to the NADP(+) site. Tyrosine 228 functions as the Proton acceptor in the catalytic mechanism. The active-site Lowers pKa of active site Tyr is the lysine 232.

The protein belongs to the short-chain dehydrogenases/reductases (SDR) family.

The protein resides in the membrane. It carries out the reaction a primary alcohol + NAD(+) = an aldehyde + NADH + H(+). The catalysed reaction is a secondary alcohol + NAD(+) = a ketone + NADH + H(+). It functions in the pathway mycotoxin biosynthesis. Its function is as follows. Dehydrogenase; part of the Tox1B locus, one of the 2 loci that mediate the biosynthesis of T-toxin, a family of linear polyketides 37 to 45 carbons in length, of which the major component is 41 carbons, and which leads to high virulence to maize. One of the PKSs (PKS1 or PKS2) could synthesize a precursor, used subsequently by the other PKS as starter unit, to add additional carbons. Variability in the length of the final carbon backbone C35-47 could be achieved by varying the number of condensation cycles, or use of different starter or extender units or might be due to decarboxylation of the penultimate product, catalyzed by DEC1. Additional proteins are required for the biosynthesis of T-toxin, including oxidoreductases RED1, RED2, RED3, LAM1 and OXI1, as well as esterase TOX9. The sequence is that of Dehydrogenase RED2 from Cochliobolus heterostrophus (strain C4 / ATCC 48331 / race T) (Southern corn leaf blight fungus).